The primary structure comprises 2073 residues: Dedicator of cytokinesis protein 11 (2073 aa).

Position 12 is a phosphoserine (Ser-12). Thr-16 is modified (phosphothreonine). Phosphoserine is present on residues Ser-23 and Ser-161. In terms of domain architecture, PH spans 165–272; sequence GVIKQGWLHK…WLIMLKKIIQ (108 aa). Phosphotyrosine is present on Tyr-248. Ser-306 and Ser-445 each carry phosphoserine. The 179-residue stretch at 640 to 818 folds into the C2 DOCK-type domain; sequence KNHLYVYPLQ…PLLKIKTHLE (179 aa). A disordered region spans residues 1227-1267; sequence QNGHGIKREDSRGSLIPEGATGFPDPGSTSENTRQSSSRSS. Phosphoserine is present on residues Ser-1237 and Ser-1240. Residues 1254-1267 are compositionally biased toward low complexity; it reads STSENTRQSSSRSS. Residues 1609-2036 form the DOCKER domain; it reads KSYASTPELR…LSDIIHEQIL (428 aa).

This sequence belongs to the DOCK family. Interacts with CDC42. As to expression, expressed in spleen, thymus, mesenteric lymph nodes (MLN), bone marrow and peripheral blood lymphocytes. Enriched in B-cells from germinal centers. Expressed in B-, T- and dendritic cells as well as Purkinje cells.

Functionally, guanine nucleotide-exchange factor (GEF) that activates CDC42 by exchanging bound GDP for free GTP. Required for marginal zone (MZ) B-cell development, is associated with early bone marrow B-cell development, MZ B-cell formation, MZ B-cell number and marginal metallophilic macrophages morphology. Facilitates filopodia formation through the activation of CDC42. The chain is Dedicator of cytokinesis protein 11 from Mus musculus (Mouse).